The following is a 57-amino-acid chain: Small hydrophobic protein (57 aa).

Over 1–8 (MPAIQPPL) the chain is Virion surface. A helical transmembrane segment spans residues 9–29 (YLTFLLLILLYLIITLYVWTI). The Intravirion segment spans residues 30–57 (LTITYKTTVRYAALYQRSFSRWGFDQSL).

This sequence belongs to the rubulavirus small hydrophobic protein family. In terms of assembly, interacts with host TNFRSF1A, RIPK1 and IRAK1; these interactions interfere with host NF-kappa-B activation at the level of receptor complexes. Interacts with host protein UBQLN4.

Its subcellular location is the virion membrane. It localises to the host cell membrane. Its function is as follows. Plays a role in the inhibition of the host NF-kappa-B pathway. This inhibition occurs at the receptor level, by preventing the signaling of TNFR1 as well as IL-1R and TLR3. This is Small hydrophobic protein (SH) from Homo sapiens (Human).